The chain runs to 134 residues: Crustacean hyperglycemic hormones isoform B (134 aa).

An N-terminal signal peptide occupies residues 1–24 (MFACRTLCLVVVMVASLGTSGVGG). Gln61 carries the post-translational modification Pyrrolidone carboxylic acid. Phe63 bears the D-phenylalanine; in form CHH-B-II mark. 3 disulfides stabilise this stretch: Cys67/Cys103, Cys83/Cys99, and Cys86/Cys112. The residue at position 132 (Val132) is a Valine amide.

The protein belongs to the arthropod CHH/MIH/GIH/VIH hormone family. Stereoinversion of L-Phe (form CHH-B-I) to D-Phe (form CHH-B-II). Produced by the medulla terminalis X-organ in the eyestalks and transported to the sinus gland where they are stored and released. Present also in the ventral nervous system.

The protein localises to the secreted. In terms of biological role, hormone found in the sinus gland of isopods and decapods which controls the blood sugar level. Has a secretagogue action over the amylase released from the midgut gland. May act as a stress hormone and may be involved in the control of molting and reproduction. This is Crustacean hyperglycemic hormones isoform B from Homarus americanus (American lobster).